A 241-amino-acid polypeptide reads, in one-letter code: Protocatechuate 3,4-dioxygenase beta chain (241 aa).

Fe cation contacts are provided by tyrosine 109, tyrosine 148, histidine 161, and histidine 163.

Belongs to the intradiol ring-cleavage dioxygenase family. As to quaternary structure, the enzyme is an oligomer of 12 copies of the alpha and beta chains. It depends on Fe(3+) as a cofactor.

The catalysed reaction is 3,4-dihydroxybenzoate + O2 = 3-carboxy-cis,cis-muconate + 2 H(+). Its pathway is aromatic compound metabolism; beta-ketoadipate pathway; 3-carboxy-cis,cis-muconate from 3,4-dihydroxybenzoate: step 1/1. Functionally, plays an essential role in the utilization of numerous aromatic and hydroaromatic compounds via the beta-ketoadipate pathway. The protein is Protocatechuate 3,4-dioxygenase beta chain (pcaH) of Acinetobacter baylyi (strain ATCC 33305 / BD413 / ADP1).